The primary structure comprises 100 residues: Large ribosomal subunit protein uL23 (100 aa).

Belongs to the universal ribosomal protein uL23 family. Part of the 50S ribosomal subunit. Contacts protein L29, and trigger factor when it is bound to the ribosome.

Its function is as follows. One of the early assembly proteins it binds 23S rRNA. One of the proteins that surrounds the polypeptide exit tunnel on the outside of the ribosome. Forms the main docking site for trigger factor binding to the ribosome. In Thermosynechococcus vestitus (strain NIES-2133 / IAM M-273 / BP-1), this protein is Large ribosomal subunit protein uL23.